Consider the following 527-residue polypeptide: Probable malate:quinone oxidoreductase (527 aa).

This sequence belongs to the MQO family. It depends on FAD as a cofactor.

It carries out the reaction (S)-malate + a quinone = a quinol + oxaloacetate. It participates in carbohydrate metabolism; tricarboxylic acid cycle; oxaloacetate from (S)-malate (quinone route): step 1/1. This Pectobacterium atrosepticum (strain SCRI 1043 / ATCC BAA-672) (Erwinia carotovora subsp. atroseptica) protein is Probable malate:quinone oxidoreductase.